The chain runs to 424 residues: MIDPRVLRDEPDRVRAAQVKRGLSDEVVDHALSADGERRRAIAAFEAKRAEQKQLGKLIPQAQGEEKQALLAQTKTLAAEVKQAEAAQAVAEEAWQAALMSIPNLAADEAPAGGEDDYVVLEEIGTPRDFAADGFEPRDHIELGRMLGAIDLDRGAKVSGSRFYFLTGAGAELELALVNLAMQQARESGFTPVIAPSMVKPRAMDGTGFLGQAADDVYRIEGQDMYLVGTSEVPMAAYHSDEILDGGALPLRYAAFSPCFRKEAGSHGKDTKGIIRVHWFDKVEMFVYTTTEESYAEHQRLLAWEKEFLEKLELAYRVIDVAAGDLGLSAQRKFDCEAWIPTQGRYRELTSTSNCTEFQTRRLDTRGRFGSEIRPISTLNGTLCAITRTIVAVLETHQQADGSVRVPKALQPWLGREVLEPVTT.

230–232 (TSE) is a binding site for L-serine. Residues 261–263 (RKE) and Val-277 contribute to the ATP site. Glu-284 is an L-serine binding site. An ATP-binding site is contributed by 348–351 (ELTS). Position 382 (Thr-382) interacts with L-serine.

This sequence belongs to the class-II aminoacyl-tRNA synthetase family. Type-1 seryl-tRNA synthetase subfamily. Homodimer. The tRNA molecule binds across the dimer.

It is found in the cytoplasm. The catalysed reaction is tRNA(Ser) + L-serine + ATP = L-seryl-tRNA(Ser) + AMP + diphosphate + H(+). It carries out the reaction tRNA(Sec) + L-serine + ATP = L-seryl-tRNA(Sec) + AMP + diphosphate + H(+). It participates in aminoacyl-tRNA biosynthesis; selenocysteinyl-tRNA(Sec) biosynthesis; L-seryl-tRNA(Sec) from L-serine and tRNA(Sec): step 1/1. Functionally, catalyzes the attachment of serine to tRNA(Ser). Is also able to aminoacylate tRNA(Sec) with serine, to form the misacylated tRNA L-seryl-tRNA(Sec), which will be further converted into selenocysteinyl-tRNA(Sec). The protein is Serine--tRNA ligase of Nocardioides sp. (strain ATCC BAA-499 / JS614).